Consider the following 200-residue polypeptide: Recombination protein RecR (200 aa).

The segment at 59 to 74 (CSTCGNIDSQNPCTVC) adopts a C4-type zinc-finger fold. Positions 82 to 177 (SIIVVVADVA…KVTRLAHGVP (96 aa)) constitute a Toprim domain.

The protein belongs to the RecR family.

Functionally, may play a role in DNA repair. It seems to be involved in an RecBC-independent recombinational process of DNA repair. It may act with RecF and RecO. This Rhodopseudomonas palustris (strain ATCC BAA-98 / CGA009) protein is Recombination protein RecR.